The following is a 205-amino-acid chain: Dephospho-CoA kinase (205 aa).

The 191-residue stretch at 15-205 (VIGLTGGIAT…VERALDQASI (191 aa)) folds into the DPCK domain. 23–28 (ATGKST) contacts ATP.

Belongs to the CoaE family.

It is found in the cytoplasm. The enzyme catalyses 3'-dephospho-CoA + ATP = ADP + CoA + H(+). The protein operates within cofactor biosynthesis; coenzyme A biosynthesis; CoA from (R)-pantothenate: step 5/5. Functionally, catalyzes the phosphorylation of the 3'-hydroxyl group of dephosphocoenzyme A to form coenzyme A. The chain is Dephospho-CoA kinase from Gloeobacter violaceus (strain ATCC 29082 / PCC 7421).